The primary structure comprises 125 residues: MLLPILAICMGASVGALARWGLALWFGAGGFMPWGTLAANLVGGYLVGVAIASFHLLPDLDPAWRLALVTGFLGGLTTFSSFSAEVVTMLLEGRPGVALLTAAAHLGGSLFLTWLGIRSVQALAA.

Helical transmembrane passes span 5 to 25 (ILAICMGASVGALARWGLALW), 37 to 57 (LAANLVGGYLVGVAIASFHLL), 71 to 91 (GFLGGLTTFSSFSAEVVTMLL), and 97 to 117 (VALLTAAAHLGGSLFLTWLGI). Na(+)-binding residues include Gly74 and Thr77.

The protein belongs to the fluoride channel Fluc/FEX (TC 1.A.43) family.

The protein resides in the cell inner membrane. It catalyses the reaction fluoride(in) = fluoride(out). Na(+) is not transported, but it plays an essential structural role and its presence is essential for fluoride channel function. In terms of biological role, fluoride-specific ion channel. Important for reducing fluoride concentration in the cell, thus reducing its toxicity. The sequence is that of Fluoride-specific ion channel FluC from Variovorax paradoxus (strain S110).